We begin with the raw amino-acid sequence, 956 residues long: Transient receptor potential channel pyrexia (956 aa).

Residues 1–491 (MENVRFSIIE…LFLKWRRIRK (491 aa)) are Cytoplasmic-facing. 8 ANK repeats span residues 132-161 (RGRTPLHFACCRANAPIAKVLLDFGADPNR), 166-195 (KEVTSLHCAASSKSVECILLLLRRKASINI), 198-227 (EKRSALHYAIDVNAVDCVEILLKYGADPNT), 231-260 (YTETPLHTASAAGFAKCVQLLLSHNADVRS), 265-294 (GKVTALHLAAENDYVECARLLLEHRAEVDC), 298-327 (SHQTPLHLACLSQSIGTVDLLISYGANVNA), 331-362 (DGRTALHAAIVKQSRSLDCCNALLKAGADVNK), and 366-395 (YGYTPLHIAALNEFSSCVYTFIEHGADITA). A helical transmembrane segment spans residues 492-512 (FFLMSLAYHTLFVILFTFYVI). Residues 513–525 (WVYVRCCKKEELC) lie on the Extracellular side of the membrane. The helical transmembrane segment at 526 to 546 (VAPGYVSTIGYLVIILNLILL) threads the bilayer. The Cytoplasmic segment spans residues 547-565 (GKEVFQMAHGLRGYAKYWE). The helical transmembrane segment at 566 to 584 (NWLQWTIGTGVLLCVTPET) threads the bilayer. At 585 to 601 (VRTDDLTAVPVWQHHVA) the chain is on the extracellular side. Residues 602–622 (AIVILLVWLELMMLVGRFPIF) form a helical membrane-spanning segment. Residues 623 to 638 (GVYVQMFTKVAVNFAK) lie on the Cytoplasmic side of the membrane. A helical membrane pass occupies residues 639–659 (FLLAYICLLVAFGLSFAVLFN). Topologically, residues 660–701 (DYPAFENITWSFLKSITMMSGELEFEDIFYGDYAVKFPVTAH) are extracellular. The N-linked (GlcNAc...) asparagine glycan is linked to Asn-666. A helical membrane pass occupies residues 702–722 (IIFLSFVLLVTVILTNLMVGL). The Cytoplasmic segment spans residues 723–956 (AVSDIQGLQV…VASSHIRRHR (234 aa)).

It belongs to the transient receptor (TC 1.A.4) family. STrpC subfamily. Homooligomer; between isoform A and isoform B. As to expression, expressed in various peripheral nerves and the central nerves in embryos. In adults, it is expressed in sensory neurons lying beneath the bristles around eyes, neurons innervating the bristles on the back of thorax and neurons in maxillary palps, proboscis and antennae. Expressed in multidendritic neurons, which mediate temperature sensing, as well as non-multidendritic neurons in larval epidermis. Localizes ubiquitously throughout neurites.

It localises to the membrane. Receptor-activated non-selective cation channel involved in protection or tolerance from high temperature stress. Activated by temperatures above 40 degrees Celsius. More permeable to K(+) than to Na(+). May act in stress protection allow flies to survive in natural environments. This Drosophila melanogaster (Fruit fly) protein is Transient receptor potential channel pyrexia (pyx).